A 109-amino-acid polypeptide reads, in one-letter code: Tetraspanin-31 (109 aa).

At 1 to 12 (MVCGGFACSKNA) the chain is on the cytoplasmic side. Residues 13 to 33 (LCALNVVYMLVGLLLIGVAAW) form a helical membrane-spanning segment. The Extracellular segment spans residues 34–44 (AKGLGLVSSIH). Residues 45-65 (IIGGVIAVGVFLLLIAVAGLV) traverse the membrane as a helical segment. Over 66–72 (GAVNHHQ) the chain is Cytoplasmic. The helical transmembrane segment at 73–93 (VLLFFYMIILGLVFIFQFGIS) threads the bilayer. At 94-109 (CSCLAINLSKQAGIIN) the chain is on the extracellular side. The N-linked (GlcNAc...) asparagine glycan is linked to N100.

This sequence belongs to the tetraspanin (TM4SF) family.

It is found in the membrane. The chain is Tetraspanin-31 (TSPAN31) from Sus scrofa (Pig).